Consider the following 143-residue polypeptide: Subtelomeric hrmA-associated cluster protein cgnA (143 aa).

G-Q-I/R/S repeat units lie at residues 11-13 (GQI), 14-16 (GPI), 17-19 (GQR), 20-22 (GQS), 23-25 (GQR), 26-28 (GQS), 29-31 (GQR), 32-34 (GQS), 35-37 (GQI), 38-40 (GQS), 41-43 (GQS), 44-46 (GQS), 47-49 (GQI), 50-52 (GQI), 53-55 (GQI), 56-58 (GQI), 59-61 (GQI), 62-64 (GQI), 65-67 (GQI), 68-70 (GQI), 71-73 (GQI), 74-76 (GQI), 77-79 (GQI), 80-82 (GQI), 83-85 (GQI), 86-88 (GQI), 89-91 (GQI), 92-94 (GQI), and 95-97 (GQA). Residues 11-68 (GQIGPIGQRGQSGQRGQSGQRGQSGQIGQSGQSGQSGQIGQIGQIGQIGQIGQIGQIG) enclose the Collagen-like domain. The 29 X 3 AA approximate tandem repeats of G-Q-I/R/S stretch occupies residues 11–97 (GQIGPIGQRG…IGQIGQIGQA (87 aa)). A disordered region spans residues 16–49 (IGQRGQSGQRGQSGQRGQSGQIGQSGQSGQSGQI).

The protein localises to the secreted. In terms of biological role, collagen-like protein; part of the subtelomeric hrmA-associated cluster (HAC) containing genes that alter the hyphal surface (such as reduced total chitin or increased beta-glucan exposure) and perturb inter-hyphal interactions within the developing biofilms, resulting in a loss of vertically aligned polarized growing filaments. Consequently, this hypoxia-typic morphotype (called H-MORPH) with altered biofilm architecture leads to increased hypoxia fitness, increased host inflammation, rapid disease progression, and mortality in a murine model of invasive aspergillosis. CgnA is directly involved in the reduction of total surface chitin and the increase of beta-glucan exposure, and mediates the detachment of the extracellular matrix and especially of its component galactosaminogalactan (GAG). In Aspergillus fumigatus (strain ATCC MYA-4609 / CBS 101355 / FGSC A1100 / Af293) (Neosartorya fumigata), this protein is Subtelomeric hrmA-associated cluster protein cgnA.